Reading from the N-terminus, the 207-residue chain is Gap junction epsilon-1 protein (207 aa).

The Cytoplasmic portion of the chain corresponds to M1 to Q22. A helical transmembrane segment spans residues F23–V43. Residues Y44–Q74 are Extracellular-facing. 2 disulfides stabilise this stretch: C53/C161 and C64/C147. A helical transmembrane segment spans residues V75–A95. Over A96 to S111 the chain is Cytoplasmic. The chain crosses the membrane as a helical span at residues T112–L132. The Extracellular segment spans residues Q133–A175. The helical transmembrane segment at M176–F196 threads the bilayer. The Cytoplasmic segment spans residues R197–T207.

Belongs to the connexin family. Beta-type (group I) subfamily. As to quaternary structure, a connexon is composed of a hexamer of connexins.

The protein resides in the cell membrane. Has significant hemichannel activity. However, has only low-efficiency gap junction activity and probably does not function as a gap junction channel in vivo. In Danio rerio (Zebrafish), this protein is Gap junction epsilon-1 protein.